We begin with the raw amino-acid sequence, 389 residues long: Krueppel-like factor 17 (389 aa).

2 disordered regions span residues 1–48 (MYGR…SGVH) and 239–279 (LVSQ…GSSE). Residues 26 to 38 (AQDNENSAPILNM) are compositionally biased toward polar residues. Residues 264–278 (KNSRPQEGTGRRGSS) show a composition bias toward basic and acidic residues. C2H2-type zinc fingers lie at residues 283 to 307 (YCCN…QRKH), 313 to 337 (YSCN…MRVH), and 343 to 365 (YKCD…QKTH). Residues 356 to 389 (DHLKQHQKTHRPGPSDPQANNNNGEQDSPPAAGP) form a disordered region. Residues 372 to 381 (PQANNNNGEQ) show a composition bias toward polar residues.

It belongs to the Sp1 C2H2-type zinc-finger protein family.

Its subcellular location is the nucleus. Its function is as follows. Transcription repressor that binds to the promoter of target genes and prevents their expression. Acts as a negative regulator of epithelial-mesenchymal transition and metastasis in breast cancer. Specifically binds the 5'-CACCC-3' sequence in the promoter of ID1, a key metastasis regulator in breast cancer, and repress its expression. May be a germ cell-specific transcription factor that plays important roles in spermatid differentiation and oocyte development. The polypeptide is Krueppel-like factor 17 (KLF17) (Homo sapiens (Human)).